The primary structure comprises 400 residues: Elongation factor Tu (400 aa).

The tr-type G domain maps to 10–210 (KPHCNVGTIG…VDTYIPIPPR (201 aa)). Residues 19-26 (GHVDHGKT) form a G1 region. Residue 19–26 (GHVDHGKT) coordinates GTP. Residue threonine 26 participates in Mg(2+) binding. The G2 stretch occupies residues 60–64 (GLTIA). Residues 81-84 (DCPG) are G3. Residues 81 to 85 (DCPGH) and 136 to 139 (NKCD) each bind GTP. Residues 136 to 139 (NKCD) are G4. Residues 174–176 (SAI) form a G5 region.

Belongs to the TRAFAC class translation factor GTPase superfamily. Classic translation factor GTPase family. EF-Tu/EF-1A subfamily. Monomer.

The protein localises to the cytoplasm. It carries out the reaction GTP + H2O = GDP + phosphate + H(+). GTP hydrolase that promotes the GTP-dependent binding of aminoacyl-tRNA to the A-site of ribosomes during protein biosynthesis. The polypeptide is Elongation factor Tu (Dehalococcoides mccartyi (strain CBDB1)).